Consider the following 298-residue polypeptide: uncharacterized protein (298 aa).

The region spanning 194–295 is the HTH araC/xylS-type domain; it reads KRLNTALIAI…QLSPSQYRKS (102 aa). DNA-binding regions (H-T-H motif) lie at residues 214 to 235 and 262 to 285; these read EQLAELATMSRANFIRIFQQHI and VLAIALEVGYQSEAHFCKVFKNYY.

This is an uncharacterized protein from Haemophilus influenzae (strain ATCC 51907 / DSM 11121 / KW20 / Rd).